The primary structure comprises 362 residues: Microfibril-associated glycoprotein 3 (362 aa).

An N-terminal signal peptide occupies residues 1–18; the sequence is MKLHCCLFTLVASIIVPA. Over 19–147 the chain is Extracellular; sequence AFVLEDVDFD…LRVIFTSGDM (129 aa). N36, N41, and N110 each carry an N-linked (GlcNAc...) asparagine glycan. An Ig-like C2-type domain is found at 45–137; it reads PSSFELSASS…SPIRASYSVT (93 aa). A disulfide bridge connects residues C73 and C124. The chain crosses the membrane as a helical span at residues 148-170; sequence SVYYMIVCLIAFTITLILNVTRL. Over 171 to 362 the chain is Cytoplasmic; the sequence is CMMSSHLRKT…KDGAYENCQL (192 aa). 2 disordered regions span residues 285–306 and 323–350; these read VINP…GSLN and ETKS…ESNC. Residues 323–337 are compositionally biased toward polar residues; it reads ETKSIDTESQGSSHF.

Post-translationally, glycosylated.

It is found in the cell membrane. Component of the elastin-associated microfibrils. The chain is Microfibril-associated glycoprotein 3 (MFAP3) from Homo sapiens (Human).